We begin with the raw amino-acid sequence, 886 residues long: cytokinesis protein 3 (886 aa).

Residues 6 to 67 (QLPCMVRALY…PSNFVHCLDI (62 aa)) form the SH3 domain. The segment covering 72–88 (PGSSMSRTSASSFRYSS) has biased composition (low complexity). A disordered region spans residues 72–189 (PGSSMSRTSA…DLSRSTPSPL (118 aa)). Residues 89-104 (PQKSSIDTPITSSDQG) show a composition bias toward polar residues. Low complexity predominate over residues 135 to 154 (LNSLGSSLSLKKSVSRPPSS). The span at 155–188 (MSRTNLDVSSRWDNTADNDSQIDAQDLSRSTPSP) shows a compositional bias: polar residues. S213 is modified (phosphoserine). Disordered stretches follow at residues 219–290 (TKST…SPSD) and 358–393 (RRGS…SPHT). The segment covering 253-264 (DNSSKPRTSLQP) has biased composition (polar residues).

This sequence belongs to the CYK3 family.

It localises to the cell tip. Its function is as follows. Involved in cytokinesis. This is cytokinesis protein 3 (cyk3) from Schizosaccharomyces pombe (strain 972 / ATCC 24843) (Fission yeast).